The chain runs to 482 residues: Glutamyl-tRNA(Gln) amidotransferase subunit A (482 aa).

Catalysis depends on charge relay system residues Lys-74 and Ser-149. Ser-173 acts as the Acyl-ester intermediate in catalysis.

Belongs to the amidase family. GatA subfamily. Heterotrimer of A, B and C subunits.

It carries out the reaction L-glutamyl-tRNA(Gln) + L-glutamine + ATP + H2O = L-glutaminyl-tRNA(Gln) + L-glutamate + ADP + phosphate + H(+). Its function is as follows. Allows the formation of correctly charged Gln-tRNA(Gln) through the transamidation of misacylated Glu-tRNA(Gln) in organisms which lack glutaminyl-tRNA synthetase. The reaction takes place in the presence of glutamine and ATP through an activated gamma-phospho-Glu-tRNA(Gln). The sequence is that of Glutamyl-tRNA(Gln) amidotransferase subunit A from Prochlorococcus marinus (strain MIT 9215).